Here is a 180-residue protein sequence, read N- to C-terminus: UPF0149 protein XAC3406 (180 aa).

It belongs to the UPF0149 family.

In Xanthomonas axonopodis pv. citri (strain 306), this protein is UPF0149 protein XAC3406.